The sequence spans 201 residues: Protein GrpE (201 aa).

Residues 1–11 (MTDSTNNQGTS) show a composition bias toward polar residues. The tract at residues 1 to 40 (MTDSTNNQGTSGRPDDDHTTEEVASVFNDPGAQAPAGEPD) is disordered.

This sequence belongs to the GrpE family. Homodimer.

It is found in the cytoplasm. Participates actively in the response to hyperosmotic and heat shock by preventing the aggregation of stress-denatured proteins, in association with DnaK and GrpE. It is the nucleotide exchange factor for DnaK and may function as a thermosensor. Unfolded proteins bind initially to DnaJ; upon interaction with the DnaJ-bound protein, DnaK hydrolyzes its bound ATP, resulting in the formation of a stable complex. GrpE releases ADP from DnaK; ATP binding to DnaK triggers the release of the substrate protein, thus completing the reaction cycle. Several rounds of ATP-dependent interactions between DnaJ, DnaK and GrpE are required for fully efficient folding. The protein is Protein GrpE of Beijerinckia indica subsp. indica (strain ATCC 9039 / DSM 1715 / NCIMB 8712).